The sequence spans 442 residues: C4-dicarboxylate transport protein 4 (442 aa).

6 helical membrane-spanning segments follow: residues Ile-20–Pro-40, Phe-53–Ile-73, Leu-90–Val-110, Gly-160–Gly-180, Pro-209–Leu-229, and Ala-233–Ile-253.

This sequence belongs to the dicarboxylate/amino acid:cation symporter (DAACS) (TC 2.A.23) family.

It is found in the cell inner membrane. Responsible for the transport of dicarboxylates such as succinate, fumarate, and malate from the periplasm across the membrane. This Bradyrhizobium diazoefficiens (strain JCM 10833 / BCRC 13528 / IAM 13628 / NBRC 14792 / USDA 110) protein is C4-dicarboxylate transport protein 4.